Consider the following 464-residue polypeptide: MLTKTIQEEKKTPKDESIGSYWITTFGCQMNKADSERMAGTLEKMGYSRAIDELKADLVLYNTCTIRDSAQQKVYSFLGRQIKRKHSLPKLKLVVAGCLAQQEGESLLRRVPELDLIMGPQHVNNLENLLERVDSGNQVVATEETFISEDITNARRDSTICGWVNIIYGCNERCSYCVVPSVRGKEQSRYPKAIKSEIQTLAQNNYKEITLLGQNIDAYGRDLPVTTKEGRKENTLTDLLYFIHDVDGIRRIRFSTSHPKYFSKRLIKACYELDKVCEHFHIPFQSGNDEILRLMARGYTIDKYKKIIENIRSLMPNASITADAIVAFPGETEKQYQDTLRLISDVGFDQVMTAAYSPRPNTPAAIWNNQIAEEVKKERLKEINELVEATSRKRNQRYLNNTESVLIEGLNPKNSMQMMGRTRTNRLTFVEIPENIEFNYSFGDELNVKITEARSFSLSGQIYK.

Positions 19-135 constitute an MTTase N-terminal domain; that stretch reads GSYWITTFGC…LENLLERVDS (117 aa). Residues cysteine 28, cysteine 64, cysteine 98, cysteine 170, cysteine 174, and cysteine 177 each contribute to the [4Fe-4S] cluster site. The Radical SAM core domain maps to 156–393; sequence RDSTICGWVN…NELVEATSRK (238 aa). The region spanning 396–464 is the TRAM domain; sequence QRYLNNTESV…SFSLSGQIYK (69 aa).

The protein belongs to the methylthiotransferase family. MiaB subfamily. In terms of assembly, monomer. [4Fe-4S] cluster serves as cofactor.

It is found in the cytoplasm. The catalysed reaction is N(6)-dimethylallyladenosine(37) in tRNA + (sulfur carrier)-SH + AH2 + 2 S-adenosyl-L-methionine = 2-methylsulfanyl-N(6)-dimethylallyladenosine(37) in tRNA + (sulfur carrier)-H + 5'-deoxyadenosine + L-methionine + A + S-adenosyl-L-homocysteine + 2 H(+). In terms of biological role, catalyzes the methylthiolation of N6-(dimethylallyl)adenosine (i(6)A), leading to the formation of 2-methylthio-N6-(dimethylallyl)adenosine (ms(2)i(6)A) at position 37 in tRNAs that read codons beginning with uridine. This is tRNA-2-methylthio-N(6)-dimethylallyladenosine synthase from Prochlorococcus marinus (strain MIT 9515).